The sequence spans 335 residues: Epidermal differentiation-specific protein (335 aa).

4 consecutive Beta/gamma crystallin 'Greek key' domains span residues 2 to 42, 43 to 81, 87 to 126, and 127 to 169; these read NTIT…KIVG, QPWI…RLIT, PQIT…RVQR, and GAWA…YPLR.

The protein belongs to the beta/gamma-crystallin family. As to expression, epidermis specific.

This chain is Epidermal differentiation-specific protein, found in Cynops pyrrhogaster (Japanese fire-bellied newt).